The sequence spans 314 residues: MDLDGKVQPPSAQVGQQPLSPDAALHEPRLLQESGIAARVAVLAAPVLADLGLRLVRVKISGQNGTTVQIMAERPDGTMDVEACESVSEALSPVLDVEDPVKQAYHLEISSPGIDRPLVRLSDFERALGQEVRVELKTGLAGRKRFRGTIGPIEASSPIGGSKGALRLTRTDAKPEEETEVLLPLDDLHEARLVLTEDLIRQALRAAKAAREGDDGNNEEQDEEQEEPAPPRRGPGRFAPRHKTQNPEHNPAQNPISARAKPLVPAGVRTEFKKSKTGERGPAQKPHLASQAARKSDTGSSRSGHDMPRKPAPK.

3 disordered regions span residues 1–20 (MDLDGKVQPPSAQVGQQPLS), 152–176 (PIEASSPIGGSKGALRLTRTDAKPE), and 206–314 (AAKA…PAPK). Over residues 10–19 (PSAQVGQQPL) the composition is skewed to polar residues. The span at 215–227 (DGNNEEQDEEQEE) shows a compositional bias: acidic residues. Residues 247–256 (PEHNPAQNPI) show a composition bias toward polar residues. Composition is skewed to basic and acidic residues over residues 270 to 279 (TEFKKSKTGE) and 303 to 314 (SGHDMPRKPAPK).

It belongs to the RimP family.

The protein localises to the cytoplasm. Functionally, required for maturation of 30S ribosomal subunits. The chain is Ribosome maturation factor RimP from Beijerinckia indica subsp. indica (strain ATCC 9039 / DSM 1715 / NCIMB 8712).